The chain runs to 560 residues: MSSRGNRNIAISAGSLAVLLGALDTYVVITIIVDIMADVGIAINQIQQVTPIITGYLLGYIAAMPLLGRASDRFGRKMLIQVGLAGFAVGSVVTALSSDLTMLVIGRIIQGSASGALLPVTLALAADLWSARSRASVLGGVGAAQELGAVLGPMYGIALVWLFNHWQAVFWVNVPLAVIAMVMIHFSLPARQQVDEPERVDVIGGVLLAIALGLTVVGLYNPEPDGKQVLPSWGLPVLAGALVAAVAFFAWEKVAKTRLIDPAGVRFRPFLAALAASLCAGAALMVTLVNVELFGQGVLGQDQDHAAFLLLRFLIALPIGALIGGWLATRIGDRLVVLIGLLIAAGGFVLISHWSVDVLADRHNLGLFTLPVLDTDLAIVGLGLGLVIGPLTSATLRAVPAAEHGIASAAVVVARMIGMLIGIAALGAWGFYRFNQHLATLAARAAGDAGSPMSLAERLTAQAVRYREAYVMMYGDIFLSAAVVCVIGALLGLLISGKHEHAEEFEPAYAPTYGGGGAIDPYDAGDADDAPTEMLDLPTQVLSAPPSDPGDERPGRHRAP.

14 consecutive transmembrane segments (helical) span residues 16-36, 48-68, 78-98, 108-128, 143-163, 168-188, 200-220, 229-249, 269-289, 307-327, 336-356, 368-388, 411-431, and 477-497; these read LAVL…VDIM, QVTP…PLLG, MLIQ…ALSS, IIQG…AADL, AAQE…VWLF, AVFW…HFSL, VDVI…VGLY, VLPS…VAFF, PFLA…VTLV, AFLL…GGWL, VVLI…HWSV, FTLP…GLVI, VVVA…AWGF, and IFLS…LISG. The beta-hairpin stretch occupies residues 362–371; the sequence is RHNLGLFTLP. Positions 519–560 are disordered; the sequence is IDPYDAGDADDAPTEMLDLPTQVLSAPPSDPGDERPGRHRAP.

This sequence belongs to the major facilitator superfamily. P55 (TC 2.A.1.3.34) family.

It is found in the cell inner membrane. Resistance to ethidium bromide is inhibited by reserpine. Functionally, in association with lipoprotein LprG transports triacyglycerides (TAG) across the inner cell membrane into the periplasm; TAG probably regulates lipid metabolism and growth regulation and plays a structural role in the outer membrane. TAG (and maybe other lipids) enters the central cavity of the P55 transporter from within the cell inner membrane via clefts on the cytoplasmic face of P55 between TM5-TM8 and TM2-TM11. From there the lipid is probably transferred to the hydrophobic cavity of LprG. Confers resistance to ethidium bromide, possibly acting as an efflux pump, requires LprG lipoprotein for normal function. Export of ethidium bromide can be complemented by the equivalent operon from M.tuberculosis (lprG-Rv1410c). Involved in drug susceptibilty, its expression alone partially complements the antibiotic susceptibilty of a double lprG-mfs deletion. Probably does not function as a bona fide drug efflux pump, but instead plays a role in outer membrane biogenesis. Probably required with LprG for normal surface localization of lipoarabinomannan (LAM). The protein is Triacylglyceride transporter MSMEG_3069/MSMEI_2992 of Mycolicibacterium smegmatis (strain ATCC 700084 / mc(2)155) (Mycobacterium smegmatis).